The chain runs to 724 residues: Long-chain-fatty-acid--CoA ligase ACSBG1 (724 aa).

The tract at residues 1–51 (MPRNSGAGYGCPHGDPSMLDSRETPQESRQDMTVGTTQEKLKTSSLTDRQP) is disordered. A compositionally biased stretch (basic and acidic residues) spans 20-30 (DSRETPQESRQ). Residues 31–51 (DMTVGTTQEKLKTSSLTDRQP) are compositionally biased toward polar residues. Phosphoserine occurs at positions 53 and 56. Residues 282 to 290 (TSGTTGNPK), 472 to 477 (AGYGLS), Asp-550, and Arg-565 contribute to the ATP site. Tyr-658 bears the Phosphotyrosine mark. Lys-701 lines the ATP pocket.

Belongs to the ATP-dependent AMP-binding enzyme family. Bubblegum subfamily.

It is found in the cytoplasm. It localises to the cytoplasmic vesicle. The protein resides in the microsome. Its subcellular location is the endoplasmic reticulum. The protein localises to the cell membrane. It catalyses the reaction a long-chain fatty acid + ATP + CoA = a long-chain fatty acyl-CoA + AMP + diphosphate. The enzyme catalyses (E)-hexadec-2-enoate + ATP + CoA = (2E)-hexadecenoyl-CoA + AMP + diphosphate. The catalysed reaction is hexadecanoate + ATP + CoA = hexadecanoyl-CoA + AMP + diphosphate. In terms of biological role, catalyzes the conversion of fatty acids such as long-chain and very long-chain fatty acids to their active form acyl-CoAs for both synthesis of cellular lipids, and degradation via beta-oxidation. Can activate diverse saturated, monosaturated and polyunsaturated fatty acids. The chain is Long-chain-fatty-acid--CoA ligase ACSBG1 from Macaca fascicularis (Crab-eating macaque).